Consider the following 331-residue polypeptide: RNA 3'-terminal phosphate cyclase (331 aa).

Residues glutamine 100 and 276–280 (HLADQ) each bind ATP. Histidine 301 (tele-AMP-histidine intermediate) is an active-site residue.

It belongs to the RNA 3'-terminal cyclase family. Type 1 subfamily.

The protein resides in the cytoplasm. It carries out the reaction a 3'-end 3'-phospho-ribonucleotide-RNA + ATP = a 3'-end 2',3'-cyclophospho-ribonucleotide-RNA + AMP + diphosphate. Functionally, catalyzes the conversion of 3'-phosphate to a 2',3'-cyclic phosphodiester at the end of RNA. The mechanism of action of the enzyme occurs in 3 steps: (A) adenylation of the enzyme by ATP; (B) transfer of adenylate to an RNA-N3'P to produce RNA-N3'PP5'A; (C) and attack of the adjacent 2'-hydroxyl on the 3'-phosphorus in the diester linkage to produce the cyclic end product. The biological role of this enzyme is unknown but it is likely to function in some aspects of cellular RNA processing. In Methanococcoides burtonii (strain DSM 6242 / NBRC 107633 / OCM 468 / ACE-M), this protein is RNA 3'-terminal phosphate cyclase.